A 367-amino-acid polypeptide reads, in one-letter code: Anhydro-N-acetylmuramic acid kinase (367 aa).

11-18 (GTSLDGVD) provides a ligand contact to ATP.

The protein belongs to the anhydro-N-acetylmuramic acid kinase family.

The catalysed reaction is 1,6-anhydro-N-acetyl-beta-muramate + ATP + H2O = N-acetyl-D-muramate 6-phosphate + ADP + H(+). The protein operates within amino-sugar metabolism; 1,6-anhydro-N-acetylmuramate degradation. Its pathway is cell wall biogenesis; peptidoglycan recycling. Functionally, catalyzes the specific phosphorylation of 1,6-anhydro-N-acetylmuramic acid (anhMurNAc) with the simultaneous cleavage of the 1,6-anhydro ring, generating MurNAc-6-P. Is required for the utilization of anhMurNAc either imported from the medium or derived from its own cell wall murein, and thus plays a role in cell wall recycling. This Chromobacterium violaceum (strain ATCC 12472 / DSM 30191 / JCM 1249 / CCUG 213 / NBRC 12614 / NCIMB 9131 / NCTC 9757 / MK) protein is Anhydro-N-acetylmuramic acid kinase.